Consider the following 545-residue polypeptide: Glucose-6-phosphate isomerase (545 aa).

The active-site Proton donor is Glu351. Active-site residues include His382 and Lys510.

Belongs to the GPI family.

It is found in the cytoplasm. It carries out the reaction alpha-D-glucose 6-phosphate = beta-D-fructose 6-phosphate. It functions in the pathway carbohydrate biosynthesis; gluconeogenesis. Its pathway is carbohydrate degradation; glycolysis; D-glyceraldehyde 3-phosphate and glycerone phosphate from D-glucose: step 2/4. Functionally, catalyzes the reversible isomerization of glucose-6-phosphate to fructose-6-phosphate. This chain is Glucose-6-phosphate isomerase, found in Shewanella loihica (strain ATCC BAA-1088 / PV-4).